The primary structure comprises 381 residues: L-lactate dehydrogenase (381 aa).

The 380-residue stretch at 1-380 folds into the FMN hydroxy acid dehydrogenase domain; it reads MIISSASDYR…KPEALVDLSK (380 aa). Tyr24 is a substrate binding site. 2 residues coordinate FMN: Ser106 and Gln127. Tyr129 provides a ligand contact to substrate. Thr155 contacts FMN. Arg164 contacts substrate. Lys251 is a binding site for FMN. His275 acts as the Proton acceptor in catalysis. A substrate-binding site is contributed by Arg278. Position 306–330 (306–330) interacts with FMN; that stretch reads DSGIRNGLDIVRMLALGADATMLGR.

The protein belongs to the FMN-dependent alpha-hydroxy acid dehydrogenase family. The cofactor is FMN.

It is found in the cell inner membrane. The catalysed reaction is (S)-lactate + A = pyruvate + AH2. In terms of biological role, catalyzes the conversion of L-lactate to pyruvate. Is coupled to the respiratory chain. The sequence is that of L-lactate dehydrogenase from Haemophilus influenzae (strain 86-028NP).